A 164-amino-acid chain; its full sequence is Endoribonuclease YbeY (164 aa).

Histidine 117, histidine 121, and histidine 127 together coordinate Zn(2+).

This sequence belongs to the endoribonuclease YbeY family. Requires Zn(2+) as cofactor.

Its subcellular location is the cytoplasm. In terms of biological role, single strand-specific metallo-endoribonuclease involved in late-stage 70S ribosome quality control and in maturation of the 3' terminus of the 16S rRNA. The sequence is that of Endoribonuclease YbeY from Mycoplasma capricolum subsp. capricolum (strain California kid / ATCC 27343 / NCTC 10154).